Consider the following 354-residue polypeptide: Histidinol-phosphate aminotransferase (354 aa).

Basic and acidic residues predominate over residues 1 to 11 (MKSFLSDKAKS). A disordered region spans residues 1–33 (MKSFLSDKAKSIEPYTPGEQPKDKNYIKLNTNE). N6-(pyridoxal phosphate)lysine is present on K211.

Belongs to the class-II pyridoxal-phosphate-dependent aminotransferase family. Histidinol-phosphate aminotransferase subfamily. As to quaternary structure, homodimer. The cofactor is pyridoxal 5'-phosphate.

The catalysed reaction is L-histidinol phosphate + 2-oxoglutarate = 3-(imidazol-4-yl)-2-oxopropyl phosphate + L-glutamate. Its pathway is amino-acid biosynthesis; L-histidine biosynthesis; L-histidine from 5-phospho-alpha-D-ribose 1-diphosphate: step 7/9. In Brachyspira hyodysenteriae (strain ATCC 49526 / WA1), this protein is Histidinol-phosphate aminotransferase.